The primary structure comprises 345 residues: MLSTVNNNIVIALDAMGGDFAPLSVIHGAGFFLDNLVDPGIKVFFHIYGDKEEVSPLLLKYKKVSNNSEFTHCSDNVLANDKPSFALRHRKDSSMKAAIVAVKEGKAFGVVSSGNTGALMAISRFVLGTLPNIYRPAIASICPTKTKSFALLDLGANVDCNADSLFQFALMGSIFAKIALKIDNPEVALLNIGTEEVKGNDSVRGAFELLKNAPGINFKGYIEASEFLEGNIDVIVADGFVGNVMLKTAEATASTFINLIKQEVFNSWIAKMLVGILLKSKLNKALTRFNPKIRSGAMFLGLNGIIIKSHGNSDAISFAHAIKFAVNAISENLNQKIINGVSHIE.

This sequence belongs to the PlsX family. Homodimer. Probably interacts with PlsY.

The protein localises to the cytoplasm. It catalyses the reaction a fatty acyl-[ACP] + phosphate = an acyl phosphate + holo-[ACP]. It functions in the pathway lipid metabolism; phospholipid metabolism. Functionally, catalyzes the reversible formation of acyl-phosphate (acyl-PO(4)) from acyl-[acyl-carrier-protein] (acyl-ACP). This enzyme utilizes acyl-ACP as fatty acyl donor, but not acyl-CoA. This Wolbachia sp. subsp. Drosophila simulans (strain wRi) protein is Phosphate acyltransferase.